We begin with the raw amino-acid sequence, 1037 residues long: Probable inorganic carbon transporter subunit DabA 2 (1037 aa).

The Zn(2+) site is built by C460, D462, H719, and C734.

This sequence belongs to the inorganic carbon transporter (TC 9.A.2) DabA family. In terms of assembly, forms a complex with DabB. It depends on Zn(2+) as a cofactor.

The protein resides in the cell inner membrane. In terms of biological role, part of an energy-coupled inorganic carbon pump. In Nitrobacter winogradskyi (strain ATCC 25391 / DSM 10237 / CIP 104748 / NCIMB 11846 / Nb-255), this protein is Probable inorganic carbon transporter subunit DabA 2.